A 256-amino-acid polypeptide reads, in one-letter code: MYQFNFILSPLDQFEIRDLFSLNANVLGNIHLSITNIGLYLSIGLLLTLGYHLLAANNKIIPNNWSISQEAIYATVHSIVINQLNPTKGQLYFPFIYALFIFILVNNLIGMVPYSFASTSHFILTFSMSFTIVLGATFLGLQRHGLKFFSLFVPSGCPLGLLPLLVLIEFISYLSRNVSLGLRLAANILSGHMLLSILSGFTYNIMTSGILFFFLGLIPLAFIIAFSGLELAIAFIQAQVFVVLTCSYIKDGLDLH.

Positions 1–8 (MYQFNFIL) are cleaved as a propeptide — removed in mature form. 7 consecutive transmembrane segments (helical) span residues 34–54 (ITNI…YHLL), 92–112 (YFPF…IGMV), 121–141 (HFIL…FLGL), 148–168 (FFSL…LVLI), 186–206 (ANIL…YNIM), 209–229 (GILF…FSGL), and 230–250 (ELAI…SYIK).

The protein belongs to the ATPase A chain family. In terms of assembly, F-type ATPases have 2 components, CF(1) - the catalytic core - and CF(0) - the membrane proton channel. CF(1) has five subunits: alpha(3), beta(3), gamma(1), delta(1), epsilon(1). CF(0) has three main subunits: a, b and c.

It localises to the mitochondrion inner membrane. Functionally, mitochondrial membrane ATP synthase (F(1)F(0) ATP synthase or Complex V) produces ATP from ADP in the presence of a proton gradient across the membrane which is generated by electron transport complexes of the respiratory chain. F-type ATPases consist of two structural domains, F(1) - containing the extramembraneous catalytic core and F(0) - containing the membrane proton channel, linked together by a central stalk and a peripheral stalk. During catalysis, ATP synthesis in the catalytic domain of F(1) is coupled via a rotary mechanism of the central stalk subunits to proton translocation. Key component of the proton channel; it may play a direct role in the translocation of protons across the membrane. In Emericella nidulans (Aspergillus nidulans), this protein is ATP synthase subunit a (atp6).